The chain runs to 227 residues: Testis expressed protein 56 (227 aa).

Expressed predominantly in the testis.

The chain is Testis expressed protein 56 from Mus musculus (Mouse).